Consider the following 336-residue polypeptide: Calcium-gated potassium channel MthK (336 aa).

The Cytoplasmic portion of the chain corresponds to 1 to 20 (MVLVIEIIRKHLPRVLKVPA). Residues 21 to 41 (TRILLLVLAVIIYGTAGFHFI) form a helical membrane-spanning segment. The Extracellular segment spans residues 42–48 (EGESWTV). Positions 49–58 (SLYWTFVTIA) form an intramembrane region, helical; Pore-forming. Residues 59-64 (TVGYGD) constitute an intramembrane region (pore-forming). Residues 59 to 64 (TVGYGD) carry the Selectivity filter motif. Over 65–69 (YSPST) the chain is Extracellular. The chain crosses the membrane as a helical span at residues 70–95 (PLGMYFTVTLIVLGIGTFAVAVERLL). Topologically, residues 96 to 106 (EFLINREQMKL) are cytoplasmic. The RCK N-terminal domain maps to 115–230 (SRHVVICGWS…RMAGADQVIS (116 aa)). 3 residues coordinate Ca(2+): aspartate 184, glutamate 210, and glutamate 212. Residues 252 to 336 (VQDVLAEEST…IERLKNYISA (85 aa)) form the RCK C-terminal domain.

As to quaternary structure, homotetramer.

Its subcellular location is the cell membrane. Functionally, calcium-gated potassium channel. This is Calcium-gated potassium channel MthK (mthK) from Methanothermobacter thermautotrophicus (strain ATCC 29096 / DSM 1053 / JCM 10044 / NBRC 100330 / Delta H) (Methanobacterium thermoautotrophicum).